A 360-amino-acid chain; its full sequence is MPTILVSALEASSNIHLEELRQNLPKDYRFIGVFEGKNALYSPREFSIMGFRDVIGRLGFLLKAHKEMVQLAKQADMVLLMDSSSFNIPLAKKIKKQDPHKKIMYYILPQVWAWKKWRAKSLEKYCDFLGAILPFEVGYYQKKAQYVGHPLLDEIKYYKKDIKGETLVFMPGSRKSEIAKIFPLFVKAAQILEQNEGFKRRVLVVPSFFKGLDLKALYGEDIELFEISYDAHKSLFEAEFAFICSGTATLEAALIGTPFVLAYRAKTMDFLIARMLVNLHYIGLANIFYNALNDETPGLGESQLHPELIQHFLSVEGLLKAYEEMDRERYFKESLRLREYLASGSARKIANEMAFLLNLT.

Belongs to the LpxB family.

It catalyses the reaction a lipid X + a UDP-2-N,3-O-bis[(3R)-3-hydroxyacyl]-alpha-D-glucosamine = a lipid A disaccharide + UDP + H(+). It functions in the pathway bacterial outer membrane biogenesis; LPS lipid A biosynthesis. Functionally, condensation of UDP-2,3-diacylglucosamine and 2,3-diacylglucosamine-1-phosphate to form lipid A disaccharide, a precursor of lipid A, a phosphorylated glycolipid that anchors the lipopolysaccharide to the outer membrane of the cell. In Helicobacter pylori (strain HPAG1), this protein is Lipid-A-disaccharide synthase.